Consider the following 1087-residue polypeptide: Band 4.1-like protein 3 (1087 aa).

At M1 the chain carries N-acetylmethionine. The disordered stretch occupies residues 1-43; it reads MTTESGSDSESKPDQEAEPQEAAGAQGRAGAPVPEPPKEEQQQ. T2 carries the post-translational modification N-acetylthreonine; in Band 4.1-like protein 3, N-terminally processed. Positions 20-32 are enriched in low complexity; it reads QEAAGAQGRAGAP. S88 bears the Phosphoserine mark. Positions 110–391 constitute an FERM domain; it reads MQCKVILLDG…EHHTFFRLLL (282 aa). The hydrophilic stretch occupies residues 394 to 513; it reads APPKKFLTLG…PGLGTDSCPL (120 aa). Phosphoserine is present on residues S420, S443, and S460. Over residues 459-469 the composition is skewed to polar residues; it reads ISQTNLITTVT. 4 disordered regions span residues 459 to 529, 541 to 563, 675 to 715, and 937 to 965; these read ISQT…TELR, GYEP…GPGR, SASL…EDAE, and SETL…SPGG. Phosphothreonine is present on residues T469 and T492. The spectrin--actin-binding stretch occupies residues 514–860; that stretch reads SPPSTHCAPT…VVQETVLVEE (347 aa). Positions 516 to 526 are enriched in polar residues; that stretch reads PSTHCAPTSPT. Residues 681–691 show a composition bias toward acidic residues; that stretch reads DPSDSSEEETD. Residues 698–707 are compositionally biased toward low complexity; sequence AADGETTATE. The residue at position 706 (T706) is a Phosphothreonine. A phosphoserine mark is found at S708, S960, and S962. Residues 861-1083 form a C-terminal (CTD) region; the sequence is RRVVHASGDA…VHKETEITPE (223 aa). Positions 947-960 are enriched in polar residues; that stretch reads ESSTVKTETISFGS. T1081 bears the Phosphothreonine mark.

As to quaternary structure, interacts (via FERM domain) with CADM1. Interacts (via FERM domain) with PRMT3; the interaction is direct and inhibits the protein-arginine N-methyltransferase activity of PRMT3. Interacts with PRMT5. Interacts with PRMT6. Expressed at high levels in brain, with lower levels in kidney, intestine, and testis. Detected in lung.

Its subcellular location is the cytoplasm. It is found in the cytoskeleton. The protein resides in the cell junction. It localises to the cell membrane. Functionally, tumor suppressor that inhibits cell proliferation and promotes apoptosis. Modulates the activity of protein arginine N-methyltransferases, including PRMT3 and PRMT5. The chain is Band 4.1-like protein 3 from Homo sapiens (Human).